The following is a 639-amino-acid chain: DNA gyrase subunit B (639 aa).

A compositionally biased stretch (basic and acidic residues) spans 392–402; it reads QAEELTRRKSA. The disordered stretch occupies residues 392 to 416; the sequence is QAEELTRRKSALESTSLPGKLADCQ. The Toprim domain occupies 423 to 537; that stretch reads SELFIVEGDS…AGYVYAAQPP (115 aa). Glutamate 429, aspartate 502, and aspartate 504 together coordinate Mg(2+). Residue lysine 624 forms a Glycyl lysine isopeptide (Lys-Gly) (interchain with G-Cter in SAMP2) linkage.

Belongs to the type II topoisomerase GyrB family. As to quaternary structure, heterotetramer, composed of two GyrA and two GyrB chains. In the heterotetramer, GyrA contains the active site tyrosine that forms a transient covalent intermediate with DNA, while GyrB binds cofactors and catalyzes ATP hydrolysis. Mg(2+) is required as a cofactor. The cofactor is Mn(2+). Ca(2+) serves as cofactor.

Its subcellular location is the cytoplasm. It catalyses the reaction ATP-dependent breakage, passage and rejoining of double-stranded DNA.. A type II topoisomerase that negatively supercoils closed circular double-stranded (ds) DNA in an ATP-dependent manner to modulate DNA topology and maintain chromosomes in an underwound state. Negative supercoiling favors strand separation, and DNA replication, transcription, recombination and repair, all of which involve strand separation. Also able to catalyze the interconversion of other topological isomers of dsDNA rings, including catenanes and knotted rings. Type II topoisomerases break and join 2 DNA strands simultaneously in an ATP-dependent manner. In Haloferax volcanii (strain ATCC 29605 / DSM 3757 / JCM 8879 / NBRC 14742 / NCIMB 2012 / VKM B-1768 / DS2) (Halobacterium volcanii), this protein is DNA gyrase subunit B.